Consider the following 118-residue polypeptide: MLVNFLLVGFGAALGAMLRYGISVLVKSKWKTNFPSATFFINITGSFLLGFLVSSALGPVWQLFLGTGFMGGYTTFSTFKVESMELKWKTNYRVLFSYLGFTYVFGLIAAFLGMMLGV.

The next 2 membrane-spanning stretches (helical) occupy residues 5 to 25 (FLLVGFGAALGAMLRYGISVL) and 47 to 67 (FLLGFLVSSALGPVWQLFLGT). Residues Gly71 and Thr74 each contribute to the Na(+) site. The chain crosses the membrane as a helical span at residues 98–118 (YLGFTYVFGLIAAFLGMMLGV).

The protein belongs to the fluoride channel Fluc/FEX (TC 1.A.43) family.

It localises to the cell membrane. It carries out the reaction fluoride(in) = fluoride(out). With respect to regulation, na(+) is not transported, but it plays an essential structural role and its presence is essential for fluoride channel function. Fluoride-specific ion channel. Important for reducing fluoride concentration in the cell, thus reducing its toxicity. In Listeria monocytogenes serovar 1/2a (strain ATCC BAA-679 / EGD-e), this protein is Fluoride-specific ion channel FluC 1.